The chain runs to 311 residues: Methionyl-tRNA formyltransferase (311 aa).

Position 108–111 (108–111 (SILP)) interacts with (6S)-5,6,7,8-tetrahydrofolate.

This sequence belongs to the Fmt family.

The enzyme catalyses L-methionyl-tRNA(fMet) + (6R)-10-formyltetrahydrofolate = N-formyl-L-methionyl-tRNA(fMet) + (6S)-5,6,7,8-tetrahydrofolate + H(+). In terms of biological role, attaches a formyl group to the free amino group of methionyl-tRNA(fMet). The formyl group appears to play a dual role in the initiator identity of N-formylmethionyl-tRNA by promoting its recognition by IF2 and preventing the misappropriation of this tRNA by the elongation apparatus. The protein is Methionyl-tRNA formyltransferase of Sorangium cellulosum (strain So ce56) (Polyangium cellulosum (strain So ce56)).